The chain runs to 317 residues: COP9 signalosome complex subunit 6b (317 aa).

An MPN domain is found at 11-164; the sequence is FKLHPLVMLN…VTIYESEFHV (154 aa).

The protein belongs to the peptidase M67A family. CSN6 subfamily. In terms of assembly, component of the CSN complex, probably composed of CSN1, CSN2, CSN3, CSN4, CSN5 (CSN5A or CSN5B), CSN6 (CSN6A or CSN6B), CSN7 and CSN8. Interacts with itself. In the complex, it probably interacts directly with CSN4, CSN5A or CSN5B, and CSN7. Binds to the translation initiation factors TIF3E1.

It localises to the cytoplasm. The protein localises to the nucleus. In terms of biological role, component of the COP9 signalosome complex (CSN), a complex involved in various cellular and developmental processes such as photomorphogenesis and auxin and jasmonate responses. The CSN complex is an essential regulator of the ubiquitin (Ubl) conjugation pathway by mediating the deneddylation of the cullin subunits of SCF-type E3 ligase complexes, leading to decrease the Ubl ligase activity of SCF. It is involved in repression of photomorphogenesis in darkness by regulating the activity of COP1-containing Ubl ligase complexes. The complex is also required for degradation of PSIAA6 by regulating the activity of the Ubl ligase SCF-TIR complex. Essential for the structural integrity of the CSN holocomplex. This chain is COP9 signalosome complex subunit 6b, found in Arabidopsis thaliana (Mouse-ear cress).